A 287-amino-acid polypeptide reads, in one-letter code: (S)-phenoxypropionate/alpha-ketoglutarate-dioxygenase (287 aa).

Fe cation contacts are provided by H102 and D104. 2-oxoglutarate contacts are provided by T129 and W242. Position 257 (H257) interacts with Fe cation. Residue R268 coordinates 2-oxoglutarate.

This sequence belongs to the TfdA dioxygenase family. In terms of assembly, monomer. Requires Fe cation as cofactor. The cofactor is L-ascorbate.

The catalysed reaction is (S)-2-(4-chloro-2-methylphenoxy)propanoate + 2-oxoglutarate + O2 = 2-methyl-4-chlorophenol + pyruvate + succinate + CO2. It carries out the reaction (S)-(2,4-dichlorophenoxy)propanoate + 2-oxoglutarate + O2 = 2,4-dichlorophenol + pyruvate + succinate + CO2. It functions in the pathway xenobiotic degradation; 2-(2,4-dichlorophenoxy)propanoate degradation. Functionally, involved in the degradation of the phenoxypropionate herbicides. Catalyzes the enantiospecific cleavage of the ether bond in the herbicid S-dichlorprop ((S)-2-(2,4-dichlorophenoxy)propionate)(S-2,4-DP) and S-mecoprop ((S)-2-(4-chloro-2-methylphenoxy)propionate)(S-2,4-MCPP). It can also accept (RS)-2-(4-chloro-2-methylphenoxy)propionate ((RS)-2,4-MCPP) and phenoxyacetate derivatives such as 2,4-dichlorophenoxyacetate (2,4-D), however it can only accept 2-oxoglutarate as oxygen acceptor. The sequence is that of (S)-phenoxypropionate/alpha-ketoglutarate-dioxygenase from Sphingobium herbicidovorans (strain ATCC 700291 / DSM 11019 / CCUG 56400 / KCTC 2939 / LMG 18315 / NBRC 16415 / MH) (Sphingomonas herbicidovorans).